The primary structure comprises 337 residues: Dolichyl-phosphate beta-glucosyltransferase ALG5C (337 aa).

Residues 1 to 6 (MNDLPP) are Lumenal-facing. The helical transmembrane segment at 7 to 27 (IANLISNILFVLLIITFLYAL) threads the bilayer. At 28 to 337 (CSRFVSDKTL…ADTPISDFEV (310 aa)) the chain is on the cytoplasmic side.

It belongs to the glycosyltransferase 2 family.

Its subcellular location is the endoplasmic reticulum membrane. The enzyme catalyses a di-trans,poly-cis-dolichyl phosphate + UDP-alpha-D-glucose = a di-trans,poly-cis-dolichyl beta-D-glucosyl phosphate + UDP. Its pathway is protein modification; protein glycosylation. Dolichyl-phosphate beta-glucosyltransferase involved in the glycosylation of glycoproteins through the synthesis of dolichyl beta-D-glucosyl phosphate which serves as a sugar donor for transfer of three glucose residues to the Man-9-GlcNAc-2-PP-dolichol precursor to N-glycans. This Trichomonas vaginalis (strain ATCC PRA-98 / G3) protein is Dolichyl-phosphate beta-glucosyltransferase ALG5C.